The following is a 499-amino-acid chain: Probable malate:quinone oxidoreductase 4 (499 aa).

It belongs to the MQO family. FAD serves as cofactor.

It carries out the reaction (S)-malate + a quinone = a quinol + oxaloacetate. Its pathway is carbohydrate metabolism; tricarboxylic acid cycle; oxaloacetate from (S)-malate (quinone route): step 1/1. The chain is Probable malate:quinone oxidoreductase 4 from Staphylococcus epidermidis (strain ATCC 35984 / DSM 28319 / BCRC 17069 / CCUG 31568 / BM 3577 / RP62A).